Consider the following 218-residue polypeptide: Ribose-5-phosphate isomerase A (218 aa).

Substrate contacts are provided by residues Thr28 to Thr31, Asp81 to Asp84, and Lys94 to Gly97. Catalysis depends on Glu103, which acts as the Proton acceptor. Lys121 is a substrate binding site.

The protein belongs to the ribose 5-phosphate isomerase family. As to quaternary structure, homodimer.

It catalyses the reaction aldehydo-D-ribose 5-phosphate = D-ribulose 5-phosphate. It participates in carbohydrate degradation; pentose phosphate pathway; D-ribose 5-phosphate from D-ribulose 5-phosphate (non-oxidative stage): step 1/1. Its function is as follows. Catalyzes the reversible conversion of ribose-5-phosphate to ribulose 5-phosphate. In Methylococcus capsulatus (strain ATCC 33009 / NCIMB 11132 / Bath), this protein is Ribose-5-phosphate isomerase A.